The following is a 294-amino-acid chain: Homoserine kinase (294 aa).

84–94 (PFSRGLGSSSA) is an ATP binding site.

The protein belongs to the GHMP kinase family. Homoserine kinase subfamily.

It is found in the cytoplasm. The catalysed reaction is L-homoserine + ATP = O-phospho-L-homoserine + ADP + H(+). Its pathway is amino-acid biosynthesis; L-threonine biosynthesis; L-threonine from L-aspartate: step 4/5. Catalyzes the ATP-dependent phosphorylation of L-homoserine to L-homoserine phosphate. The protein is Homoserine kinase of Campylobacter concisus (strain 13826).